Reading from the N-terminus, the 197-residue chain is Probable NADPH:quinone oxidoreductase 1 (197 aa).

The protein belongs to the SsuE family. In terms of assembly, homotetramer. FMN serves as cofactor.

The enzyme catalyses a quinone + NADH + H(+) = a quinol + NAD(+). The catalysed reaction is a quinone + NADPH + H(+) = a quinol + NADP(+). The enzyme apparently serves as a quinone reductase in connection with conjugation reactions of hydroquinones involved in detoxification pathways. This is Probable NADPH:quinone oxidoreductase 1 from Oryza sativa subsp. japonica (Rice).